The primary structure comprises 270 residues: Glutamate racemase (270 aa).

Substrate contacts are provided by residues 7-8 (DS) and 39-40 (YG). Cysteine 70 (proton donor/acceptor) is an active-site residue. Residue 71 to 72 (NT) coordinates substrate. Cysteine 194 acts as the Proton donor/acceptor in catalysis. Position 195–196 (195–196 (TH)) interacts with substrate.

This sequence belongs to the aspartate/glutamate racemases family.

It carries out the reaction L-glutamate = D-glutamate. It functions in the pathway cell wall biogenesis; peptidoglycan biosynthesis. In terms of biological role, provides the (R)-glutamate required for cell wall biosynthesis. The polypeptide is Glutamate racemase (Paracoccus denitrificans (strain Pd 1222)).